A 156-amino-acid chain; its full sequence is ATP synthase subunit b 2 (156 aa).

Residues 11–31 (LLAFIFFVWFCMKFVWPPIMG) form a helical membrane-spanning segment.

The protein belongs to the ATPase B chain family. F-type ATPases have 2 components, F(1) - the catalytic core - and F(0) - the membrane proton channel. F(1) has five subunits: alpha(3), beta(3), gamma(1), delta(1), epsilon(1). F(0) has three main subunits: a(1), b(2) and c(10-14). The alpha and beta chains form an alternating ring which encloses part of the gamma chain. F(1) is attached to F(0) by a central stalk formed by the gamma and epsilon chains, while a peripheral stalk is formed by the delta and b chains.

The protein localises to the cell inner membrane. F(1)F(0) ATP synthase produces ATP from ADP in the presence of a proton or sodium gradient. F-type ATPases consist of two structural domains, F(1) containing the extramembraneous catalytic core and F(0) containing the membrane proton channel, linked together by a central stalk and a peripheral stalk. During catalysis, ATP synthesis in the catalytic domain of F(1) is coupled via a rotary mechanism of the central stalk subunits to proton translocation. In terms of biological role, component of the F(0) channel, it forms part of the peripheral stalk, linking F(1) to F(0). The sequence is that of ATP synthase subunit b 2 from Pseudoalteromonas atlantica (strain T6c / ATCC BAA-1087).